Reading from the N-terminus, the 102-residue chain is Flagellar hook-basal body complex protein FliE (102 aa).

It belongs to the FliE family.

Its subcellular location is the bacterial flagellum basal body. This chain is Flagellar hook-basal body complex protein FliE, found in Halalkalibacterium halodurans (strain ATCC BAA-125 / DSM 18197 / FERM 7344 / JCM 9153 / C-125) (Bacillus halodurans).